A 71-amino-acid polypeptide reads, in one-letter code: IRCFITPDVTSQACPDGHVCYTKMWCDNFCGMRGKRVDLGCAATCPTVKPGVDIKCCSTDNCNPFPTRKRS.

Disulfide bonds link C3–C20, C14–C41, C26–C30, C45–C56, and C57–C62.

The protein belongs to the three-finger toxin family. Long-chain subfamily. Type II alpha-neurotoxin sub-subfamily. Expressed by the venom gland.

Its subcellular location is the secreted. Functionally, binds with high affinity to muscular (alpha-1/CHRNA1) and neuronal (alpha-7/CHRNA7) nicotinic acetylcholine receptor (nAChR) and inhibits acetylcholine from binding to the receptor, thereby impairing neuromuscular and neuronal transmission. The sequence is that of Long neurotoxin 1 from Naja haje haje (Egyptian cobra).